A 230-amino-acid polypeptide reads, in one-letter code: 7-cyano-7-deazaguanine synthase (230 aa).

14-24 serves as a coordination point for ATP; the sequence is LSGGLDSTTTL. Cysteine 194, cysteine 204, cysteine 207, and cysteine 210 together coordinate Zn(2+).

This sequence belongs to the QueC family. Zn(2+) serves as cofactor.

The enzyme catalyses 7-carboxy-7-deazaguanine + NH4(+) + ATP = 7-cyano-7-deazaguanine + ADP + phosphate + H2O + H(+). Its pathway is purine metabolism; 7-cyano-7-deazaguanine biosynthesis. Functionally, catalyzes the ATP-dependent conversion of 7-carboxy-7-deazaguanine (CDG) to 7-cyano-7-deazaguanine (preQ(0)). The chain is 7-cyano-7-deazaguanine synthase from Vesicomyosocius okutanii subsp. Calyptogena okutanii (strain HA).